The sequence spans 479 residues: MEIRLRLAPSPTGLFHIGTARTALFNWLYAQKIGGKFLIRIEDTDFLRSKSEYTKNILDGLKWLGLQWNEEPVKQSDRISIHKKYIKKLLECGAAYRCFTTEDEISELREEQKKKGLPPKHDNRHRNLSKEEIETFISQGRTSVIRFKIDEEIQIKWIDQIRGEIKWQGKDLGGDLVLSRRAMGYEIGDPLYNLAVVVDDNFMNITHVVRGEDHISNTAKQILIYEALDFKLPTFSHTPLILNNEGKKLSKRDCVTSIDEFRDMGYLPEALSNYMAFLGWSPKSATSEILSLDEISKIFELSDINKAGAKFSWEKLNWINSQYIKNMETVKLSETIGKYWDNMGWDPPSQEWAIKLAILIKDSMTLLKDAIDQSKPFFLLPPIQKEGKDFLESNDGKTSLKLILNYLIEQNTGKVDKDKAKEIINEISKMHNVKKGILMKSLRVAFFGSLSGPDLIQSWELFSESKSDISRIERCLKSI.

The 'HIGH' region motif lies at 9–19 (PSPTGLFHIGT). A 'KMSKS' region motif is present at residues 248-252 (KLSKR). ATP is bound at residue Lys251.

It belongs to the class-I aminoacyl-tRNA synthetase family. Glutamate--tRNA ligase type 1 subfamily. Monomer.

It is found in the cytoplasm. It carries out the reaction tRNA(Glu) + L-glutamate + ATP = L-glutamyl-tRNA(Glu) + AMP + diphosphate. Functionally, catalyzes the attachment of glutamate to tRNA(Glu) in a two-step reaction: glutamate is first activated by ATP to form Glu-AMP and then transferred to the acceptor end of tRNA(Glu). The polypeptide is Glutamate--tRNA ligase (Prochlorococcus marinus (strain MIT 9312)).